Consider the following 562-residue polypeptide: Potassium-transporting ATPase potassium-binding subunit (562 aa).

Helical transmembrane passes span 6 to 26, 62 to 82, 132 to 152, 170 to 190, 253 to 273, 283 to 303, 327 to 347, 356 to 376, 379 to 399, 416 to 436, 483 to 503, and 526 to 546; these read FLLI…LGSF, YALA…ALLM, GLAV…FALI, VFRI…LFFV, FVQM…FGQV, LIWA…YAEL, FGIL…CGAV, ALGG…FGGV, GLYG…LMIG, MTAL…ALAI, LLLA…VLAI, and LFIG…FVPA.

The protein belongs to the KdpA family. In terms of assembly, the system is composed of three essential subunits: KdpA, KdpB and KdpC.

It is found in the cell inner membrane. Its function is as follows. Part of the high-affinity ATP-driven potassium transport (or Kdp) system, which catalyzes the hydrolysis of ATP coupled with the electrogenic transport of potassium into the cytoplasm. This subunit binds the periplasmic potassium ions and delivers the ions to the membrane domain of KdpB through an intramembrane tunnel. In Serratia proteamaculans (strain 568), this protein is Potassium-transporting ATPase potassium-binding subunit.